A 188-amino-acid polypeptide reads, in one-letter code: UPF0397 protein LCK_00164 (188 aa).

5 helical membrane-spanning segments follow: residues 15–35, 48–68, 79–99, 121–141, and 154–174; these read VVAT…IAIP, GWLA…VGLI, GAPW…LGFG, WQAV…DIII, and AVTT…LLVA.

The protein belongs to the UPF0397 family.

Its subcellular location is the cell membrane. This Leuconostoc citreum (strain KM20) protein is UPF0397 protein LCK_00164.